The chain runs to 104 residues: ATP-dependent Clp protease adapter protein ClpS (104 aa).

It belongs to the ClpS family. As to quaternary structure, binds to the N-terminal domain of the chaperone ClpA.

Involved in the modulation of the specificity of the ClpAP-mediated ATP-dependent protein degradation. The chain is ATP-dependent Clp protease adapter protein ClpS from Desulforapulum autotrophicum (strain ATCC 43914 / DSM 3382 / VKM B-1955 / HRM2) (Desulfobacterium autotrophicum).